The chain runs to 156 residues: Small ribosomal subunit protein uS7 (156 aa).

Belongs to the universal ribosomal protein uS7 family. Part of the 30S ribosomal subunit. Contacts proteins S9 and S11.

Its function is as follows. One of the primary rRNA binding proteins, it binds directly to 16S rRNA where it nucleates assembly of the head domain of the 30S subunit. Is located at the subunit interface close to the decoding center, probably blocks exit of the E-site tRNA. This chain is Small ribosomal subunit protein uS7, found in Thiomonas delicata (Thiomonas cuprina).